Here is a 30-residue protein sequence, read N- to C-terminus: LGSAPITEEAIATPPSAETKLVPVGYGIKK.

This sequence belongs to the EF-1-beta/EF-1-delta family. In terms of assembly, EF-1 is composed of 4 subunits: alpha, beta (1B-alpha=beta'), delta (1B-beta), and gamma (1B-gamma).

Functionally, EF-1-beta and EF-1-delta stimulate the exchange of GDP bound to EF-1-alpha to GTP. The polypeptide is Elongation factor 1-delta (Populus euphratica (Euphrates poplar)).